We begin with the raw amino-acid sequence, 364 residues long: DNA polymerase IV (364 aa).

Residues 7–187 form the UmuC domain; that stretch reads IIHVDMDAFY…LPVNRVPGVG (181 aa). Residues Asp-11 and Asp-105 each coordinate Mg(2+). Glu-106 is an active-site residue.

Belongs to the DNA polymerase type-Y family. Monomer. Requires Mg(2+) as cofactor.

It localises to the cytoplasm. It catalyses the reaction DNA(n) + a 2'-deoxyribonucleoside 5'-triphosphate = DNA(n+1) + diphosphate. Functionally, poorly processive, error-prone DNA polymerase involved in untargeted mutagenesis. Copies undamaged DNA at stalled replication forks, which arise in vivo from mismatched or misaligned primer ends. These misaligned primers can be extended by PolIV. Exhibits no 3'-5' exonuclease (proofreading) activity. May be involved in translesional synthesis, in conjunction with the beta clamp from PolIII. This chain is DNA polymerase IV, found in Stenotrophomonas maltophilia (strain K279a).